The following is an 85-amino-acid chain: MERKRYSKRYCKYTEAKISFIDYKDLDMLKHTLSERYKIMPRRLTGNSKKWQERVEVAIKRARHMALIPYIVDRKKVVDSPFKQH.

This sequence belongs to the bacterial ribosomal protein bS18 family. In terms of assembly, part of the 30S ribosomal subunit. Forms a tight heterodimer with protein bS6.

Its function is as follows. Binds as a heterodimer with protein bS6 to the central domain of the 16S rRNA, where it helps stabilize the platform of the 30S subunit. This is Small ribosomal subunit protein bS18 from Helicobacter pylori (strain P12).